The following is a 476-amino-acid chain: Glycogen synthase (476 aa).

An ADP-alpha-D-glucose-binding site is contributed by Lys15.

The protein belongs to the glycosyltransferase 1 family. Bacterial/plant glycogen synthase subfamily.

The enzyme catalyses [(1-&gt;4)-alpha-D-glucosyl](n) + ADP-alpha-D-glucose = [(1-&gt;4)-alpha-D-glucosyl](n+1) + ADP + H(+). Its pathway is glycan biosynthesis; glycogen biosynthesis. Synthesizes alpha-1,4-glucan chains using ADP-glucose. This Streptococcus agalactiae serotype III (strain NEM316) protein is Glycogen synthase.